The sequence spans 209 residues: PRA1 family protein A3 (209 aa).

4 consecutive transmembrane segments (helical) span residues 51 to 72 (LYYY…ALIT), 76 to 98 (AILG…AATF), 143 to 163 (LVFV…SCGL), and 164 to 184 (LWVL…ASLR).

This sequence belongs to the PRA1 family.

Its subcellular location is the endosome membrane. In terms of biological role, may be involved in both secretory and endocytic intracellular trafficking in the endosomal/prevacuolar compartments. The chain is PRA1 family protein A3 (PRA1A3) from Arabidopsis thaliana (Mouse-ear cress).